Consider the following 284-residue polypeptide: NAD kinase (284 aa).

Asp-61 acts as the Proton acceptor in catalysis. Residues 61–62, Arg-66, 136–137, Arg-147, Lys-164, Asp-166, and Leu-201 contribute to the NAD(+) site; these read DG and ND.

It belongs to the NAD kinase family. It depends on a divalent metal cation as a cofactor.

The protein resides in the cytoplasm. The enzyme catalyses NAD(+) + ATP = ADP + NADP(+) + H(+). Its function is as follows. Involved in the regulation of the intracellular balance of NAD and NADP, and is a key enzyme in the biosynthesis of NADP. Catalyzes specifically the phosphorylation on 2'-hydroxyl of the adenosine moiety of NAD to yield NADP. The sequence is that of NAD kinase from Dehalococcoides mccartyi (strain ATCC BAA-2100 / JCM 16839 / KCTC 5957 / BAV1).